We begin with the raw amino-acid sequence, 308 residues long: Ornithine carbamoyltransferase (308 aa).

Carbamoyl phosphate contacts are provided by residues 57 to 60 (STRT), Gln84, Arg108, and 135 to 138 (HPCQ). Residues Asn166, Asp224, and 228–229 (SM) each bind L-ornithine. Carbamoyl phosphate contacts are provided by residues 264–265 (CL) and Arg292.

The protein belongs to the aspartate/ornithine carbamoyltransferase superfamily. OTCase family.

It is found in the cytoplasm. It carries out the reaction carbamoyl phosphate + L-ornithine = L-citrulline + phosphate + H(+). The protein operates within amino-acid biosynthesis; L-arginine biosynthesis; L-arginine from L-ornithine and carbamoyl phosphate: step 1/3. Reversibly catalyzes the transfer of the carbamoyl group from carbamoyl phosphate (CP) to the N(epsilon) atom of ornithine (ORN) to produce L-citrulline. The chain is Ornithine carbamoyltransferase from Ralstonia nicotianae (strain ATCC BAA-1114 / GMI1000) (Ralstonia solanacearum).